The sequence spans 150 residues: Large ribosomal subunit protein uL11 (150 aa).

The protein belongs to the universal ribosomal protein uL11 family. Part of the ribosomal stalk of the 50S ribosomal subunit. Interacts with L10 and the large rRNA to form the base of the stalk. L10 forms an elongated spine to which L12 dimers bind in a sequential fashion forming a multimeric L10(L12)X complex. In terms of processing, one or more lysine residues are methylated.

In terms of biological role, forms part of the ribosomal stalk which helps the ribosome interact with GTP-bound translation factors. The protein is Large ribosomal subunit protein uL11 of Ureaplasma urealyticum serovar 10 (strain ATCC 33699 / Western).